Consider the following 281-residue polypeptide: Cytochrome bc1 complex cytochrome c subunit (281 aa).

Residues 17 to 37 form a helical membrane-spanning segment; it reads AAGAMALAVGLTGAGILVNAV. Cytochrome c domains are found at residues 52–132 and 162–240; these read ALIQ…EANG and ADVA…KSAK. Residues Cys-65, Cys-68, His-69, Cys-175, Cys-178, and His-179 each contribute to the heme c site. The chain crosses the membrane as a helical span at residues 259-279; that stretch reads GMMMWLVGIVVLVAAAMWIGS.

As to quaternary structure, the cytochrome bc1 complex is composed of a cytochrome b (QcrB), the Rieske iron-sulfur protein (QcrA) and a diheme cytochrome c (QcrC) subunit. The bc1 complex forms a supercomplex with cytochrome c oxidase (cytochrome aa3). Post-translationally, binds 2 heme c groups covalently per subunit.

It is found in the cell membrane. It catalyses the reaction a quinol + 2 Fe(III)-[cytochrome c](out) = a quinone + 2 Fe(II)-[cytochrome c](out) + 2 H(+)(out). Its function is as follows. Cytochrome c1 subunit of the cytochrome bc1 complex, an essential component of the respiratory electron transport chain required for ATP synthesis. The bc1 complex catalyzes the oxidation of menaquinol and the reduction of cytochrome c in the respiratory chain. The bc1 complex operates through a Q-cycle mechanism that couples electron transfer to generation of the proton gradient that drives ATP synthesis. The protein is Cytochrome bc1 complex cytochrome c subunit (qcrC) of Corynebacterium diphtheriae (strain ATCC 700971 / NCTC 13129 / Biotype gravis).